The sequence spans 219 residues: Orotate phosphoribosyltransferase (219 aa).

Lysine 26 contacts 5-phospho-alpha-D-ribose 1-diphosphate. 34 to 35 provides a ligand contact to orotate; it reads FF. 5-phospho-alpha-D-ribose 1-diphosphate contacts are provided by residues 72 to 73, arginine 98, lysine 99, lysine 102, histidine 104, and 124 to 132; these read YK and DDVITAGTA. Orotate is bound by residues threonine 128 and arginine 156.

It belongs to the purine/pyrimidine phosphoribosyltransferase family. PyrE subfamily. In terms of assembly, homodimer. It depends on Mg(2+) as a cofactor.

The catalysed reaction is orotidine 5'-phosphate + diphosphate = orotate + 5-phospho-alpha-D-ribose 1-diphosphate. It participates in pyrimidine metabolism; UMP biosynthesis via de novo pathway; UMP from orotate: step 1/2. In terms of biological role, catalyzes the transfer of a ribosyl phosphate group from 5-phosphoribose 1-diphosphate to orotate, leading to the formation of orotidine monophosphate (OMP). This chain is Orotate phosphoribosyltransferase, found in Stenotrophomonas maltophilia (strain K279a).